Consider the following 211-residue polypeptide: DNA-directed RNA polymerases I, II, and III subunit RPABC1 (211 aa).

It belongs to the archaeal Rpo5/eukaryotic RPB5 RNA polymerase subunit family. As to quaternary structure, component of the RNA polymerase I (Pol I), RNA polymerase II (Pol II) and RNA polymerase III (Pol III) complexes consisting of at least 13, 12 and 17 subunits, respectively. In RNA Pol II, this subunit is present in 2-fold molar excess over the other subunits.

It is found in the nucleus. Functionally, DNA-dependent RNA polymerase catalyzes the transcription of DNA into RNA using the four ribonucleoside triphosphates as substrates. Common component of RNA polymerases I, II and III which synthesize ribosomal RNA precursors, mRNA precursors and many functional non-coding RNAs, and small RNAs, such as 5S rRNA and tRNAs, respectively. Pol II is the central component of the basal RNA polymerase II transcription machinery. Pols are composed of mobile elements that move relative to each other. In Pol II, RPB5 is part of the lower jaw surrounding the central large cleft and thought to grab the incoming DNA template. Seems to be the major component in this process. This is DNA-directed RNA polymerases I, II, and III subunit RPABC1 (rpb-5) from Caenorhabditis elegans.